Consider the following 565-residue polypeptide: Periplasmic trehalase (565 aa).

The signal sequence occupies residues 1-30 (MKSPTPSRPQKMALIPACIFLCFAALSVQA). Residues Arg152, 159–160 (WD), Asn196, 205–207 (RSQ), 277–279 (RPE), and Gly310 contribute to the substrate site. Catalysis depends on proton donor/acceptor residues Asp312 and Glu496. Residue Glu511 participates in substrate binding. The segment at 539-565 (CDNVPATRPLSESTTQPLKQKEAEPTP) is disordered.

This sequence belongs to the glycosyl hydrolase 37 family. In terms of assembly, monomer.

It is found in the periplasm. The catalysed reaction is alpha,alpha-trehalose + H2O = alpha-D-glucose + beta-D-glucose. Functionally, provides the cells with the ability to utilize trehalose at high osmolarity by splitting it into glucose molecules that can subsequently be taken up by the phosphotransferase-mediated uptake system. The protein is Periplasmic trehalase of Escherichia coli O7:K1 (strain IAI39 / ExPEC).